Here is a 545-residue protein sequence, read N- to C-terminus: ATP synthase subunit alpha, mitochondrial (545 aa).

A mitochondrion-targeting transit peptide spans 1-35 (MLARTAAIRSLSRTLINSTKAARPAAAALASTRRL). Serine 57 and serine 178 each carry phosphoserine. 206-213 (GDRQTGKT) contacts ATP.

It belongs to the ATPase alpha/beta chains family. As to quaternary structure, F-type ATPases have 2 components, CF(1) - the catalytic core - and CF(0) - the membrane proton channel. CF(1) has five subunits: alpha(3), beta(3), gamma(1), delta(1), epsilon(1). CF(0) has three main subunits: a, b and c.

The protein localises to the mitochondrion inner membrane. Mitochondrial membrane ATP synthase (F(1)F(0) ATP synthase or Complex V) produces ATP from ADP in the presence of a proton gradient across the membrane which is generated by electron transport complexes of the respiratory chain. F-type ATPases consist of two structural domains, F(1) - containing the extramembraneous catalytic core, and F(0) - containing the membrane proton channel, linked together by a central stalk and a peripheral stalk. During catalysis, ATP synthesis in the catalytic domain of F(1) is coupled via a rotary mechanism of the central stalk subunits to proton translocation. Subunits alpha and beta form the catalytic core in F(1). Rotation of the central stalk against the surrounding alpha(3)beta(3) subunits leads to hydrolysis of ATP in three separate catalytic sites on the beta subunits. Subunit alpha does not bear the catalytic high-affinity ATP-binding sites. This Saccharomyces cerevisiae (strain ATCC 204508 / S288c) (Baker's yeast) protein is ATP synthase subunit alpha, mitochondrial (ATP1).